We begin with the raw amino-acid sequence, 1696 residues long: uncharacterized protein (1696 aa).

Disordered regions lie at residues 1 to 113, 151 to 194, 258 to 284, and 299 to 376; these read MDSS…HPQY, DSWT…SRSR, DVTR…PEKK, and GRRE…KQRG. Residues 21–42 show a composition bias toward pro residues; the sequence is LHPPSAPLPPPPPLPPPPPPRQ. Residues 52–61 are compositionally biased toward polar residues; it reads GRSTQSNGQR. The segment covering 96–113 has biased composition (low complexity); it reads QQQHQPLSLQQQQQHPQY. The span at 170–183 shows a compositional bias: polar residues; that stretch reads RNYQYDYSRNSSGV. Composition is skewed to basic and acidic residues over residues 267 to 284, 325 to 340, and 358 to 376; these read EGAR…PEKK, ETPR…EWSR, and RGKE…KQRG. The residue at position 378 (Ser378) is a Phosphoserine. Disordered stretches follow at residues 419 to 483, 688 to 724, 1063 to 1090, 1184 to 1211, 1319 to 1340, 1361 to 1429, and 1658 to 1696; these read RALL…GGKL, SDIG…LDSP, IKHK…GGTS, TSKS…VAGS, GEAV…SGVR, VVSV…SDAS, and SESR…DSGM. Basic and acidic residues-rich tracts occupy residues 421–436 and 695–704; these read LLSD…ERNG and DDNKRIDKNV. Residue Ser708 is modified to Phosphoserine. The span at 1184–1204 shows a compositional bias: basic and acidic residues; the sequence is TSKSIEKIESSGGTSEHRTPE. The segment covering 1361-1370 has biased composition (basic and acidic residues); the sequence is VVSVPHRDPQ. 3 stretches are compositionally biased toward polar residues: residues 1389–1398, 1658–1667, and 1677–1696; these read NYSTQKSYPS, SESRCNQSIS, and SAAN…DSGM.

This is an uncharacterized protein from Arabidopsis thaliana (Mouse-ear cress).